A 70-amino-acid polypeptide reads, in one-letter code: DNA-directed RNA polymerase subunit omega (70 aa).

The protein belongs to the RNA polymerase subunit omega family. As to quaternary structure, the RNAP catalytic core consists of 2 alpha, 1 beta, 1 beta' and 1 omega subunit. When a sigma factor is associated with the core the holoenzyme is formed, which can initiate transcription.

It carries out the reaction RNA(n) + a ribonucleoside 5'-triphosphate = RNA(n+1) + diphosphate. Its function is as follows. Promotes RNA polymerase assembly. Latches the N- and C-terminal regions of the beta' subunit thereby facilitating its interaction with the beta and alpha subunits. This Marinobacter nauticus (strain ATCC 700491 / DSM 11845 / VT8) (Marinobacter aquaeolei) protein is DNA-directed RNA polymerase subunit omega.